Here is a 93-residue protein sequence, read N- to C-terminus: Ribonuclease P protein component 4 (93 aa).

Positions 55, 58, 81, and 83 each coordinate Zn(2+).

It belongs to the eukaryotic/archaeal RNase P protein component 4 family. As to quaternary structure, consists of a catalytic RNA component and at least 4-5 protein subunits. Zn(2+) serves as cofactor.

Its subcellular location is the cytoplasm. It carries out the reaction Endonucleolytic cleavage of RNA, removing 5'-extranucleotides from tRNA precursor.. Functionally, part of ribonuclease P, a protein complex that generates mature tRNA molecules by cleaving their 5'-ends. This chain is Ribonuclease P protein component 4, found in Halobacterium salinarum (strain ATCC 29341 / DSM 671 / R1).